Here is a 37-residue protein sequence, read N- to C-terminus: Large ribosomal subunit protein bL36 (37 aa).

The protein belongs to the bacterial ribosomal protein bL36 family.

This is Large ribosomal subunit protein bL36 (rpmJ) from Geobacillus stearothermophilus (Bacillus stearothermophilus).